The sequence spans 380 residues: Protein trichome birefringence-like 38 (380 aa).

The helical; Signal-anchor for type II membrane protein transmembrane segment at 7–29 threads the bilayer; sequence SLLLLFLPLLTVTILSGVEQAFA. The short motif at 134–136 is the GDS motif element; sequence GDS. A DCXHWCLPGXXDXWN motif motif is present at residues 357-371; that stretch reads DCSHWCLPGLPDTWN.

The protein belongs to the PC-esterase family. TBL subfamily.

The protein resides in the membrane. Its function is as follows. May act as a bridging protein that binds pectin and other cell wall polysaccharides. Probably involved in maintaining esterification of pectins. May be involved in the specific O-acetylation of cell wall polymers. In Arabidopsis thaliana (Mouse-ear cress), this protein is Protein trichome birefringence-like 38 (TBL38).